A 371-amino-acid polypeptide reads, in one-letter code: MQTMDKQNLLESTRGARSFLGSLWKSEASRIPPVDLPAVELAVQSNHYCHAQKDSGSHPDPEKQRARRKLYVASAICLVFMIGEIIGGYLAQSLAIMTDAAHLLTDFASMLISLFALWVSSRPATKTMNFGWHRAEILGALLSVLSIWVVTGVLVYLAVQRLISGDYEIKGDTMLITSGCAVAVNLIMGLALHQSGHGHSHGNSRDDSSQQQNPSVRAAFIHVIGDLLQSVGVLVAAYIIYFKPEYKYVDPICTFLFSILVLGTTLTILRDVILVLMEGTPKGVDFTTVKNLLLSVDGVEALHSLHIWALTVAQPVLSVHIAIAQNADAQAVLKVARDRLQGKFNFHTMTIQIEKYSEDMKNCQACQGPLE.

The Cytoplasmic portion of the chain corresponds to 1-69 (MQTMDKQNLL…DPEKQRARRK (69 aa)). The short motif at 47–50 (HYCH) is the Mitochondrial localization signal element. Cys-49 is a binding site for Zn(2+). The chain crosses the membrane as a helical span at residues 70–90 (LYVASAICLVFMIGEIIGGYL). At 91 to 99 (AQSLAIMTD) the chain is on the lumenal side. Residues 100–120 (AAHLLTDFASMLISLFALWVS) traverse the membrane as a helical segment. Zn(2+)-binding residues include His-102 and Asp-106. Over 121–136 (SRPATKTMNFGWHRAE) the chain is Cytoplasmic. A helical transmembrane segment spans residues 137–157 (ILGALLSVLSIWVVTGVLVYL). The Lumenal segment spans residues 158–172 (AVQRLISGDYEIKGD). A helical transmembrane segment spans residues 173-193 (TMLITSGCAVAVNLIMGLALH). The Cytoplasmic segment spans residues 194-219 (QSGHGHSHGNSRDDSSQQQNPSVRAA). The helical transmembrane segment at 220-240 (FIHVIGDLLQSVGVLVAAYII) threads the bilayer. Residues His-222 and Asp-226 each contribute to the Zn(2+) site. Over 241–248 (YFKPEYKY) the chain is Lumenal. The helical transmembrane segment at 249–269 (VDPICTFLFSILVLGTTLTIL) threads the bilayer. The Cytoplasmic portion of the chain corresponds to 270–303 (RDVILVLMEGTPKGVDFTTVKNLLLSVDGVEALH). A Lysosomal targeting motif motif is present at residues 293–294 (LL). Residue Ser-295 is modified to Phosphoserine. His-303, His-320, and Glu-354 together coordinate Zn(2+). The chain crosses the membrane as a helical span at residues 304 to 324 (SLHIWALTVAQPVLSVHIAIA). Residues 325–371 (QNADAQAVLKVARDRLQGKFNFHTMTIQIEKYSEDMKNCQACQGPLE) lie on the Lumenal side of the membrane.

This sequence belongs to the cation diffusion facilitator (CDF) transporter (TC 2.A.4) family. SLC30A subfamily. Homodimer. Interacts (via lysosomal targeting motif) with AP3D1; in AP-3-mediated transport to lysosomes. Interacts with TMEM163. Post-translationally, phosphorylated at Ser-295. Phosphorylation at Ser-295 prevents localization to lysosomes. Dephosphorylation of Ser-295 which triggers localization to lysosomes, accumulation of zinc into lysosomes and lysosomal-mediated cell death is induced by TNF-alpha.

Its subcellular location is the cytoplasmic vesicle. It localises to the secretory vesicle membrane. The protein localises to the zymogen granule membrane. It is found in the endosome membrane. The protein resides in the lysosome membrane. Its subcellular location is the mitochondrion inner membrane. It localises to the cell membrane. It carries out the reaction Zn(2+)(in) + 2 H(+)(out) = Zn(2+)(out) + 2 H(+)(in). Functionally, electroneutral proton-coupled antiporter concentrating zinc ions into a variety of intracellular organelles including endosomes, zymogen granules and mitochondria. Thereby, plays a crucial role in cellular zinc homeostasis to confer upon cells protection against its potential cytotoxicity. Regulates the zinc concentration of milk, through the transport of zinc ions into secretory vesicles of mammary cells. By concentrating zinc ions into lysosomes participates to lysosomal-mediated cell death during early mammary gland involution. Its function is as follows. Electroneutral proton-coupled antiporter mediating the efflux of zinc ions through the plasma membrane. This Mus musculus (Mouse) protein is Proton-coupled zinc antiporter SLC30A2.